A 72-amino-acid polypeptide reads, in one-letter code: UPF0270 protein YheU (72 aa).

Belongs to the UPF0270 family.

This is UPF0270 protein YheU from Salmonella dublin (strain CT_02021853).